The sequence spans 760 residues: Probable ubiquitin carboxyl-terminal hydrolase creB (760 aa).

The tract at residues 1 to 28 (MGSFLRSFRNNAGSTTPSVGAVPAKKEV) is disordered. Positions 8–18 (FRNNAGSTTPS) are enriched in polar residues. The 415-residue stretch at 55–469 (YGMENYGNTC…CAYVLFYQET (415 aa)) folds into the USP domain. The active-site Nucleophile is the cysteine 64. Disordered stretches follow at residues 114–146 (AEAQAEKQRAANAQRPGMPPAQPQKPEDKDSPD) and 242–270 (PAAIEKSLPAPDHAETVDQSASSGSKTPN). The segment covering 258–270 (VDQSASSGSKTPN) has biased composition (polar residues). Histidine 420 functions as the Proton acceptor in the catalytic mechanism. Residues 520–760 (EEHNRPNGLK…LRKKSFSILS (241 aa)) form a disordered region. A coiled-coil region spans residues 575–635 (KSDVQGKKER…AALEASKASK (61 aa)). Basic and acidic residues-rich tracts occupy residues 578-626 (VQGK…ELKA), 635-651 (KAQEDRRQSPDHGKDKL), and 708-742 (DPKDDPFQDSHHPNKPMMKEDEQANHKDPKHERTG). The segment covering 743-760 (HGKWRSFSLRKKSFSILS) has biased composition (basic residues).

Belongs to the peptidase C19 family. As to quaternary structure, interacts with creA, creC and qutD.

The enzyme catalyses Thiol-dependent hydrolysis of ester, thioester, amide, peptide and isopeptide bonds formed by the C-terminal Gly of ubiquitin (a 76-residue protein attached to proteins as an intracellular targeting signal).. Its function is as follows. Ubiquitin thioesterase component of the regulatory network controlling carbon source utilization through ubiquitination and deubiquitination involving creA, creB, creC, creD and acrB. Deubiquitinates the creA catabolic repressor and the quinate permease qutD. Also plays a role in response to carbon starvation and the control of extracellular proteases activity. The chain is Probable ubiquitin carboxyl-terminal hydrolase creB (creB) from Aspergillus clavatus (strain ATCC 1007 / CBS 513.65 / DSM 816 / NCTC 3887 / NRRL 1 / QM 1276 / 107).